A 60-amino-acid chain; its full sequence is Large ribosomal subunit protein bL33 (60 aa).

It belongs to the bacterial ribosomal protein bL33 family.

This is Large ribosomal subunit protein bL33 from Chlorobium limicola (strain DSM 245 / NBRC 103803 / 6330).